Here is a 235-residue protein sequence, read N- to C-terminus: Zorya protein ZorB (235 aa).

A helical membrane pass occupies residues 25 to 44 (LMAGLMMVFMFISIAYMHYV). Positions 87 to 225 (QTLEVRFKSP…RVTFKVVTNA (139 aa)) constitute an OmpA-like domain.

The protein belongs to the MotB family.

It is found in the cell inner membrane. Component of antiviral defense system Zorya type II, composed of ZorA, ZorB and ZorE. Expression of Zorya type II in E.coli (strain MG1655) confers resistance to phages SECphi7 and T7. While most T7 infected Zorya-containing cells undergo abortive infection, a minority produce viable phage progeny. These eventually accumulate to a high multiplicity of infection, leading to culture collapse by 170 minutes after initial infection. ZorA and ZorB probably assemble in the cell inner membrane and exert their effect there. The sequence is that of Zorya protein ZorB from Escherichia coli (strain ATCC 8739 / DSM 1576 / NBRC 3972 / NCIMB 8545 / WDCM 00012 / Crooks).